The chain runs to 318 residues: Ribonuclease Z (318 aa).

Zn(2+)-binding residues include His62, His64, Asp66, His67, His140, Asp211, and His269. Asp66 (proton acceptor) is an active-site residue.

Belongs to the RNase Z family. In terms of assembly, homodimer. It depends on Zn(2+) as a cofactor.

The enzyme catalyses Endonucleolytic cleavage of RNA, removing extra 3' nucleotides from tRNA precursor, generating 3' termini of tRNAs. A 3'-hydroxy group is left at the tRNA terminus and a 5'-phosphoryl group is left at the trailer molecule.. Zinc phosphodiesterase, which displays some tRNA 3'-processing endonuclease activity. Probably involved in tRNA maturation, by removing a 3'-trailer from precursor tRNA. The sequence is that of Ribonuclease Z from Brevibacillus brevis (strain 47 / JCM 6285 / NBRC 100599).